The following is a 91-amino-acid chain: Large ribosomal subunit protein uL23c (91 aa).

It belongs to the universal ribosomal protein uL23 family. As to quaternary structure, part of the 50S ribosomal subunit.

Its subcellular location is the plastid. It localises to the chloroplast. Binds to 23S rRNA. The polypeptide is Large ribosomal subunit protein uL23c (rpl23) (Anthoceros angustus (Hornwort)).